Here is a 155-residue protein sequence, read N- to C-terminus: Small ribosomal subunit protein uS7 (155 aa).

This sequence belongs to the universal ribosomal protein uS7 family. As to quaternary structure, part of the 30S ribosomal subunit. Contacts proteins S9 and S11.

Its function is as follows. One of the primary rRNA binding proteins, it binds directly to 16S rRNA where it nucleates assembly of the head domain of the 30S subunit. Is located at the subunit interface close to the decoding center, probably blocks exit of the E-site tRNA. The chain is Small ribosomal subunit protein uS7 from Lactococcus lactis subsp. lactis (strain IL1403) (Streptococcus lactis).